Here is a 451-residue protein sequence, read N- to C-terminus: Speckle-type POZ protein homolog (451 aa).

The disordered stretch occupies residues 51–75; sequence EVVSSGSGNSAHGRSISPSPSSASH. Residues 60–75 show a composition bias toward low complexity; sequence SAHGRSISPSPSSASH. In terms of domain architecture, MATH spans 95–225; that stretch reads KFNYMWTINN…GDRLSIFCEV (131 aa). Positions 265–338 constitute a BTB domain; that stretch reads SDFTLVCKSD…MYTGQTKYIE (74 aa).

Belongs to the Tdpoz family.

The protein resides in the nucleus. The protein localises to the nucleus speckle. Its pathway is protein modification; protein ubiquitination. Functionally, mediates ubiquitination and proteasomal degradation of target proteins, most likely in complex with cul-3. May promote the degradation of bromodomain-containing proteins such as bet-1. The chain is Speckle-type POZ protein homolog from Caenorhabditis elegans.